A 698-amino-acid chain; its full sequence is Colicin V secretion/processing ATP-binding protein CvaB (698 aa).

The Peptidase C39 domain occupies Gln-26–Val-145. Cys-32 is an active-site residue. 7 consecutive transmembrane segments (helical) span residues Gly-33–Leu-53, Val-92–Val-112, Leu-176–Gly-196, Gly-211–Ser-231, Thr-289–Tyr-311, Leu-315–Tyr-334, and Ile-412–Phe-432. An ABC transmembrane type-1 domain is found at Leu-176–Ile-458. One can recognise an ABC transporter domain in the interval Leu-492 to Ile-698. Gly-526–Thr-533 is an ATP binding site.

Belongs to the ABC transporter superfamily. Colicin V exporter (TC 3.A.1.110.2) family.

Its subcellular location is the cell membrane. Functionally, involved, in conjunction with CvaA, in the secretion of colicin V. This chain is Colicin V secretion/processing ATP-binding protein CvaB (cvaB), found in Escherichia coli.